A 549-amino-acid polypeptide reads, in one-letter code: MIPLSLSETTLPTVTTQAPDLDYWLLSPLLVVFAAGVIGVIVEAFVPAQRRYSIQTALAMVAVGVAFVLTLVQVGALPADSAGLTLAFATVVVDRPSLFFQGVILALALASLLLIAERRDGESAFTGQAAAVPGSEEERAHVLAGSQHTEVYPLVMFAVLGMQLFTAANDFLTMFIALEVMSLPLYLLCGLARRRRLFSQEAALKYFLLGAFSSAFFLFGIAMVYGYAGAVEFAAVRAAGSSGGLIDGGEPLLLIGIAMIGVGMLFKVGTVPFHNWKPDVYQGAPTPITALMASGTLVAAFGAMLRVFYVAFGTTVAQWRPMLWVVAILTMVVAAVIAVTQRDIKRLLAYSSVVHAGFILTAVVAANADGLTGAMFYLAAYGFTTVGAFAIVTLVRNPDNGAEAGDLTQWAGLGRTSPFLAASLGLFLLAFAGIPLTSGFIGKFAVFEAAVAAGATPLVVVGVLSSAVTAFFYVRIIVLMFFAEPAENAPRVLKPGILTGTTVGLGVAATLLLGILPGPVLEHVIPQPAAETSEAVAAEHTAADSLFAR.

14 helical membrane-spanning segments follow: residues 26–46 (LSPL…EAFV), 57–77 (ALAM…VGAL), 96–116 (PSLF…LLIA), 148–168 (HTEV…FTAA), 171–191 (FLTM…LCGL), 206–226 (YFLL…MVYG), 253–273 (LLIG…TVPF), 297–317 (LVAA…TTVA), 321–341 (PMLW…AVTQ), 347–367 (LLAY…VAAN), 375–395 (MFYL…VTLV), 421–441 (AASL…SGFI), 466–486 (SAVT…AEPA), and 496–516 (GILT…LGIL).

It belongs to the complex I subunit 2 family. In terms of assembly, NDH-1 is composed of 14 different subunits. Subunits NuoA, H, J, K, L, M, N constitute the membrane sector of the complex.

The protein localises to the cell membrane. The catalysed reaction is a quinone + NADH + 5 H(+)(in) = a quinol + NAD(+) + 4 H(+)(out). Its function is as follows. NDH-1 shuttles electrons from NADH, via FMN and iron-sulfur (Fe-S) centers, to quinones in the respiratory chain. The immediate electron acceptor for the enzyme in this species is believed to be a menaquinone. Couples the redox reaction to proton translocation (for every two electrons transferred, four hydrogen ions are translocated across the cytoplasmic membrane), and thus conserves the redox energy in a proton gradient. The sequence is that of NADH-quinone oxidoreductase subunit N from Thermobifida fusca (strain YX).